Reading from the N-terminus, the 73-residue chain is uncharacterized protein (73 aa).

The next 2 membrane-spanning stretches (helical) occupy residues L7 to L27 and Y47 to L67.

It localises to the cell membrane. This is an uncharacterized protein from Methanocaldococcus jannaschii (strain ATCC 43067 / DSM 2661 / JAL-1 / JCM 10045 / NBRC 100440) (Methanococcus jannaschii).